The following is a 113-amino-acid chain: Large ribosomal subunit protein uL22 (113 aa).

The protein belongs to the universal ribosomal protein uL22 family. Part of the 50S ribosomal subunit.

Functionally, this protein binds specifically to 23S rRNA; its binding is stimulated by other ribosomal proteins, e.g. L4, L17, and L20. It is important during the early stages of 50S assembly. It makes multiple contacts with different domains of the 23S rRNA in the assembled 50S subunit and ribosome. Its function is as follows. The globular domain of the protein is located near the polypeptide exit tunnel on the outside of the subunit, while an extended beta-hairpin is found that lines the wall of the exit tunnel in the center of the 70S ribosome. The protein is Large ribosomal subunit protein uL22 of Bacillus thuringiensis subsp. konkukian (strain 97-27).